The chain runs to 173 residues: Large ribosomal subunit protein uL16 (173 aa).

The protein belongs to the universal ribosomal protein uL16 family.

In Methanosarcina acetivorans (strain ATCC 35395 / DSM 2834 / JCM 12185 / C2A), this protein is Large ribosomal subunit protein uL16.